The chain runs to 152 residues: Early glycoprotein GP48 (152 aa).

Residues 1–25 (MVMMLRTWRLLPMVLLAAYCYCVFG) form the signal peptide. N-linked (GlcNAc...) asparagine; by host glycosylation is found at asparagine 48, asparagine 53, asparagine 61, asparagine 69, asparagine 108, asparagine 112, asparagine 122, asparagine 139, and asparagine 148.

Belongs to the RL11 family. N-glycosylated and possibly O-glycosylated.

It localises to the virion membrane. In Homo sapiens (Human), this protein is Early glycoprotein GP48 (UL4).